The following is a 141-amino-acid chain: Hemoglobin subunit alpha-2 (141 aa).

Residues 1–141 (VLSPADKNNV…VSTVLTSKYR (141 aa)) enclose the Globin domain. Residue H58 participates in O2 binding. Position 87 (H87) interacts with heme b.

This sequence belongs to the globin family. In terms of assembly, heterotetramer of two alpha chains and two beta chains. Red blood cells.

In terms of biological role, involved in oxygen transport from the lung to the various peripheral tissues. This Varecia variegata (Black-and-white ruffed lemur) protein is Hemoglobin subunit alpha-2.